The primary structure comprises 253 residues: Large ribosomal subunit protein uL4 (253 aa).

The interval 62-107 (WGSGRGVSHVPRLKNSSRAARVPHAKGGRRAHPPKPEADRSEKVNT) is disordered. A compositionally biased stretch (basic residues) spans 82–94 (RVPHAKGGRRAHP). Positions 95–107 (PKPEADRSEKVNT) are enriched in basic and acidic residues.

The protein belongs to the universal ribosomal protein uL4 family. Part of the 50S ribosomal subunit.

Its function is as follows. One of the primary rRNA binding proteins, this protein initially binds near the 5'-end of the 23S rRNA. It is important during the early stages of 50S assembly. It makes multiple contacts with different domains of the 23S rRNA in the assembled 50S subunit and ribosome. Forms part of the polypeptide exit tunnel. The protein is Large ribosomal subunit protein uL4 of Methanosarcina mazei (strain ATCC BAA-159 / DSM 3647 / Goe1 / Go1 / JCM 11833 / OCM 88) (Methanosarcina frisia).